The primary structure comprises 93 residues: Aspartyl/glutamyl-tRNA(Asn/Gln) amidotransferase subunit C (93 aa).

The protein belongs to the GatC family. As to quaternary structure, heterotrimer of A, B and C subunits.

The catalysed reaction is L-glutamyl-tRNA(Gln) + L-glutamine + ATP + H2O = L-glutaminyl-tRNA(Gln) + L-glutamate + ADP + phosphate + H(+). It catalyses the reaction L-aspartyl-tRNA(Asn) + L-glutamine + ATP + H2O = L-asparaginyl-tRNA(Asn) + L-glutamate + ADP + phosphate + 2 H(+). Its function is as follows. Allows the formation of correctly charged Asn-tRNA(Asn) or Gln-tRNA(Gln) through the transamidation of misacylated Asp-tRNA(Asn) or Glu-tRNA(Gln) in organisms which lack either or both of asparaginyl-tRNA or glutaminyl-tRNA synthetases. The reaction takes place in the presence of glutamine and ATP through an activated phospho-Asp-tRNA(Asn) or phospho-Glu-tRNA(Gln). This chain is Aspartyl/glutamyl-tRNA(Asn/Gln) amidotransferase subunit C, found in Rubrobacter xylanophilus (strain DSM 9941 / JCM 11954 / NBRC 16129 / PRD-1).